A 472-amino-acid chain; its full sequence is FAD-dependent monooxygenase ltmM (472 aa).

A helical transmembrane segment spans residues 7 to 27; sequence VIIVGGSVAGLSLAHCLEKIG. Positions 34, 48, and 107 each coordinate FAD. Asn186 carries N-linked (GlcNAc...) asparagine glycosylation. FAD contacts are provided by Asp306 and Ala319. A helical transmembrane segment spans residues 450 to 470; it reads IVYALYLVAAAAFILYCLSSL.

Belongs to the paxM FAD-dependent monooxygenase family. FAD serves as cofactor.

Its subcellular location is the membrane. It participates in secondary metabolite biosynthesis. In terms of biological role, FAD-dependent monooxygenase; part of the gene cluster that mediates the biosynthesis of lolitrems, indole-diterpene mycotoxins that are potent tremorgens in mammals, and are synthesized by clavicipitaceous fungal endophytes in association with their grass hosts. The geranylgeranyl diphosphate (GGPP) synthase ltmG is proposed to catalyze the first step in lolitrem biosynthesis. LtmG catalyzes a series of iterative condensations of isopentenyl diphosphate (IPP) with dimethylallyl diphosphate (DMAPP), geranyl diphosphate (GPP), and farnesyl diphosphate (FPP), to form GGPP. GGPP then condenses with indole-3-glycerol phosphate to form 3-geranylgeranylindole, an acyclic intermediate, to be incorporated into paxilline. Either ltmG or ltmC could be responsible for this step, as both are putative prenyl transferases. The FAD-dependent monooxygenase ltmM then catalyzes the epoxidation of the two terminal alkenes of the geranylgeranyl moiety, which is subsequently cyclized by ltmC, to paspaline. The cytochrome P450 monooxygenases ltmQ and ltmP can sequentially oxidize paspaline to terpendole E and terpendole F. Alternatively, ltmP converts paspaline to an intermediate which is oxidized by ltmQ to terpendole F. LtmF, ltmK, ltmE and ltmJ appear to be unique to the epichloe endophytes. The prenyltransferase ltmF is involved in the 27-hydroxyl-O-prenylation. The cytochrome P450 monooxygenase ltmK is required for the oxidative acetal ring formation. The multi-functional prenyltransferase ltmE is required for C20- and C21-prenylations of the indole ring of paspalanes and acts together with the cytochrome P450 monooxygenase ltmJ to yield lolitremanes by multiple oxidations and ring closures. The stereoisomer pairs of lolitriol and lolitrem N or lolitrem B and lolitrem F may be attributed to variations in the way in which ring closure can occur under the action of ltmJ. While the major product of this pathway is lolitrem B, the prenyl transferases and cytochrome P450 monooxygenases identified in this pathway have a remarkable versatility in their regio- and stereo-specificities to generate a diverse range of metabolites that are products of a metabolic grid rather than a linear pathway. The polypeptide is FAD-dependent monooxygenase ltmM (ltmM) (Epichloe festucae (strain Fl1)).